A 274-amino-acid polypeptide reads, in one-letter code: Cytochrome b-c1 complex subunit Rieske, mitochondrial (274 aa).

Topologically, residues 79–103 (SHTDVKVPDFSEYRRPEVLDSTKSS) are mitochondrial matrix. The chain crosses the membrane as a helical span at residues 104–140 (RESSEARKGFSYLVTAVTTVGVAYAAKNAVTQFVSSM). Residues 141 to 274 (SASADVLALA…FTSDDMVIVG (134 aa)) are Mitochondrial intermembrane-facing. One can recognise a Rieske domain in the interval 187–272 (EAAVELSQLR…YEFTSDDMVI (86 aa)). C217, H219, C236, H239, and S241 together coordinate [2Fe-2S] cluster. An intrachain disulfide couples C222 to C238.

This sequence belongs to the Rieske iron-sulfur protein family. In terms of assembly, component of the ubiquinol-cytochrome c oxidoreductase (cytochrome b-c1 complex, complex III, CIII), a multisubunit enzyme composed of 11 subunits. The complex is composed of 3 respiratory subunits cytochrome b, cytochrome c1 and Rieske protein UQCRFS1, 2 core protein subunits UQCRC1/QCR1 and UQCRC2/QCR2, and 6 low-molecular weight protein subunits UQCRH/QCR6, UQCRB/QCR7, UQCRQ/QCR8, UQCR10/QCR9, UQCR11/QCR10 and subunit 9, the cleavage product of Rieske protein UQCRFS1. The complex exists as an obligatory dimer and forms supercomplexes (SCs) in the inner mitochondrial membrane with NADH-ubiquinone oxidoreductase (complex I, CI) and cytochrome c oxidase (complex IV, CIV), resulting in different assemblies (supercomplex SCI(1)III(2)IV(1) and megacomplex MCI(2)III(2)IV(2)). Incorporation of the Rieske protein UQCRFS1 is the penultimate step in complex III assembly. Interacts with TTC19, which is involved in the clearance of UQCRFS1 fragments. Component of the ubiquinol-cytochrome c oxidoreductase (cytochrome b-c1 complex, complex III, CIII). Subunit 9 corresponds to the mitochondrial targeting sequence (MTS) of Rieske protein UQCRFS1. It is retained after processing and incorporated inside complex III, where it remains bound to the complex and localizes between the 2 core subunits UQCRC1/QCR1 and UQCRC2/QCR2. Requires [2Fe-2S] cluster as cofactor. In terms of processing, proteolytic processing is necessary for the correct insertion of UQCRFS1 in the complex III dimer. Several fragments are generated during UQCRFS1 insertion, most probably due to the endogenous matrix-processing peptidase (MPP) activity of the 2 core protein subunits UQCRC1/QCR1 and UQCRC2/QCR2, which are homologous to the 2 mitochondrial-processing peptidase (MPP) subunits beta-MPP and alpha-MPP respectively. The action of the protease is also necessary for the clearance of the UQCRFS1 fragments.

The protein resides in the mitochondrion inner membrane. It carries out the reaction a quinol + 2 Fe(III)-[cytochrome c](out) = a quinone + 2 Fe(II)-[cytochrome c](out) + 2 H(+)(out). Its function is as follows. Component of the ubiquinol-cytochrome c oxidoreductase, a multisubunit transmembrane complex that is part of the mitochondrial electron transport chain which drives oxidative phosphorylation. The respiratory chain contains 3 multisubunit complexes succinate dehydrogenase (complex II, CII), ubiquinol-cytochrome c oxidoreductase (cytochrome b-c1 complex, complex III, CIII) and cytochrome c oxidase (complex IV, CIV), that cooperate to transfer electrons derived from NADH and succinate to molecular oxygen, creating an electrochemical gradient over the inner membrane that drives transmembrane transport and the ATP synthase. The cytochrome b-c1 complex catalyzes electron transfer from ubiquinol to cytochrome c, linking this redox reaction to translocation of protons across the mitochondrial inner membrane, with protons being carried across the membrane as hydrogens on the quinol. In the process called Q cycle, 2 protons are consumed from the matrix, 4 protons are released into the intermembrane space and 2 electrons are passed to cytochrome c. The Rieske protein is a catalytic core subunit containing a [2Fe-2S] iron-sulfur cluster. It cycles between 2 conformational states during catalysis to transfer electrons from the quinol bound in the Q(0) site in cytochrome b to cytochrome c1. Incorporation of UQCRFS1 is the penultimate step in complex III assembly. In terms of biological role, component of the ubiquinol-cytochrome c oxidoreductase (cytochrome b-c1 complex, complex III, CIII). UQCRFS1 undergoes proteolytic processing once it is incorporated in the complex III dimer. One of the fragments, called subunit 9, corresponds to its mitochondrial targeting sequence (MTS). The proteolytic processing is necessary for the correct insertion of UQCRFS1 in the complex III dimer, but the persistence of UQCRFS1-derived fragments may prevent newly imported UQCRFS1 to be processed and assembled into complex III and is detrimental for the complex III structure and function. In Symphalangus syndactylus (Siamang), this protein is Cytochrome b-c1 complex subunit Rieske, mitochondrial (UQCRFS1).